A 435-amino-acid chain; its full sequence is GTPase Der (435 aa).

2 EngA-type G domains span residues Pro4–Asp167 and Ile175–Asn350. GTP contacts are provided by residues Gly10–Ser17, Asp57–Ile61, Asn119–Asp122, Gly181–Ser188, Asp228–Ile232, and Asn293–Asp296. The region spanning Lys351–Lys435 is the KH-like domain.

The protein belongs to the TRAFAC class TrmE-Era-EngA-EngB-Septin-like GTPase superfamily. EngA (Der) GTPase family. Associates with the 50S ribosomal subunit.

Its function is as follows. GTPase that plays an essential role in the late steps of ribosome biogenesis. This is GTPase Der from Levilactobacillus brevis (strain ATCC 367 / BCRC 12310 / CIP 105137 / JCM 1170 / LMG 11437 / NCIMB 947 / NCTC 947) (Lactobacillus brevis).